The chain runs to 312 residues: MDNNEILLANPRGFCAGVERAIEIVERALQRFGAPIYVRHEVVHNKFVVDDLRAKGAVFVEELDEVPTGNTVIFSAHGVSQAVREEADKRGLRVFDATCPLVTKVHIEVGRMREQGRELVMIGHKGHPEVEGTMGQVKDGIHLVETAADVANLQVADPDKLAYVTQTTLSVDDAAAIVTALRERFPNIMGPKKDDICYATQNRQDAVKFMTPHADVVFVVGSKNSSNSNRLREVAELRGVPAYLVDNAAGIDPAWIVGKRRIGVTAGASAPEVLVAEVIERLKALSGASVRNLDGVPEKVTFPLPKELQEAR.

Cys-15 is a [4Fe-4S] cluster binding site. Residues His-44 and His-77 each contribute to the (2E)-4-hydroxy-3-methylbut-2-enyl diphosphate site. The dimethylallyl diphosphate site is built by His-44 and His-77. Residues His-44 and His-77 each coordinate isopentenyl diphosphate. Cys-99 serves as a coordination point for [4Fe-4S] cluster. His-127 provides a ligand contact to (2E)-4-hydroxy-3-methylbut-2-enyl diphosphate. His-127 contributes to the dimethylallyl diphosphate binding site. His-127 is an isopentenyl diphosphate binding site. Residue Glu-129 is the Proton donor of the active site. Thr-167 contacts (2E)-4-hydroxy-3-methylbut-2-enyl diphosphate. Residue Cys-197 coordinates [4Fe-4S] cluster. The (2E)-4-hydroxy-3-methylbut-2-enyl diphosphate site is built by Ser-225, Ser-226, Asn-227, and Ser-269. Ser-225, Ser-226, Asn-227, and Ser-269 together coordinate dimethylallyl diphosphate. The isopentenyl diphosphate site is built by Ser-225, Ser-226, Asn-227, and Ser-269.

Belongs to the IspH family. [4Fe-4S] cluster serves as cofactor.

It catalyses the reaction isopentenyl diphosphate + 2 oxidized [2Fe-2S]-[ferredoxin] + H2O = (2E)-4-hydroxy-3-methylbut-2-enyl diphosphate + 2 reduced [2Fe-2S]-[ferredoxin] + 2 H(+). The enzyme catalyses dimethylallyl diphosphate + 2 oxidized [2Fe-2S]-[ferredoxin] + H2O = (2E)-4-hydroxy-3-methylbut-2-enyl diphosphate + 2 reduced [2Fe-2S]-[ferredoxin] + 2 H(+). The protein operates within isoprenoid biosynthesis; dimethylallyl diphosphate biosynthesis; dimethylallyl diphosphate from (2E)-4-hydroxy-3-methylbutenyl diphosphate: step 1/1. Its pathway is isoprenoid biosynthesis; isopentenyl diphosphate biosynthesis via DXP pathway; isopentenyl diphosphate from 1-deoxy-D-xylulose 5-phosphate: step 6/6. In terms of biological role, catalyzes the conversion of 1-hydroxy-2-methyl-2-(E)-butenyl 4-diphosphate (HMBPP) into a mixture of isopentenyl diphosphate (IPP) and dimethylallyl diphosphate (DMAPP). Acts in the terminal step of the DOXP/MEP pathway for isoprenoid precursor biosynthesis. This Azoarcus sp. (strain BH72) protein is 4-hydroxy-3-methylbut-2-enyl diphosphate reductase.